The following is a 360-amino-acid chain: Phenylalanine--tRNA ligase alpha subunit (360 aa).

E260 serves as a coordination point for Mg(2+).

Belongs to the class-II aminoacyl-tRNA synthetase family. Phe-tRNA synthetase alpha subunit type 1 subfamily. As to quaternary structure, tetramer of two alpha and two beta subunits. Requires Mg(2+) as cofactor.

The protein resides in the cytoplasm. The enzyme catalyses tRNA(Phe) + L-phenylalanine + ATP = L-phenylalanyl-tRNA(Phe) + AMP + diphosphate + H(+). This chain is Phenylalanine--tRNA ligase alpha subunit, found in Beijerinckia indica subsp. indica (strain ATCC 9039 / DSM 1715 / NCIMB 8712).